The primary structure comprises 703 residues: MNDLNDFLKTILLSFIFFLLLSLPTVAEADVTNKVNYSKDVIYQIVTDRFSDGNPGNNPSGAIFSQNCIDLHKYCGGDWQGIIDKINDGYLTDLGITALWISQPVENVYALHPSGYTSYHGYWARDYKKTNPYYGNFDDFDRLMSTAHSNGIKVIMDFTPNHSSPALETNPNYVENGAIYDNGALLGNYSNDQQNLFHHNGGTDFSSYEDSIYRNLYDLADYDLNNTVMDQYLKESIKFWLDKGIDGIRVDAVKHMSEGWQTSLMSEIYSHKPVFTFGEWFLGSGEVDPQNHHFANESGMSLLDFQFGQTIRNVLKDRTSNWYDFNEMITSTEKEYNEVIDQVTFIDNHDMSRFSVGSSSNRQTDMALAVLLTSRGVPTIYYGTEQYVTGGNDPENRKPLKTFDRSTNSYQIISKLASLRQTNSALGYGTTTERWLNEDIYIYERTFGNSIVLTAVNSSNSNQTITNLNTSLPQGNYTDELQQRLDGNTITVNANGAVNSFQLRANSVAVWQVSNPSTSPLIGQVGPMMGKAGNTITVSGEGFGDERGSVLFDSTSSEIISWSNTKISVKVPNVAGGYYDLSVVTAANIKSPTYKEFEVLSGNQVSVRFGVNNATTSPGTNLYIVGNVNELGNWDADKAIGPMFNQVMYQYPTWYYDISVPAGKNLEYKYIKKDQNGNVVWQSGNNRTYTSPTTGTDTVMINW.

A signal peptide spans 1–29; that stretch reads MNDLNDFLKTILLSFIFFLLLSLPTVAEA. The interval 30-160 is A1; sequence DVTNKVNYSK…GIKVIMDFTP (131 aa). Ca(2+) contacts are provided by Asp52, Asn54, Asn57, and Asn58. A disulfide bridge connects residues Cys68 and Cys75. Ca(2+)-binding residues include Gly76 and Asp78. Residue 122–123 participates in substrate binding; that stretch reads YW. A Ca(2+)-binding site is contributed by Asn161. A b region spans residues 161–224; it reads NHSSPALETN…NLYDLADYDL (64 aa). His162 lines the substrate pocket. Ile212 contacts Ca(2+). 215 to 218 provides a ligand contact to substrate; sequence NLYD. Position 221 (Asp221) interacts with Ca(2+). The tract at residues 225-428 is A2; sequence NNTVMDQYLK…LRQTNSALGY (204 aa). Arg249 serves as a coordination point for substrate. Catalysis depends on Asp251, which acts as the Nucleophile. 254 to 255 serves as a coordination point for substrate; the sequence is KH. His255 contacts Ca(2+). The Proton donor role is filled by Glu279. Positions 349, 393, and 397 each coordinate substrate. Positions 429-516 are c; the sequence is GTTTERWLNE…SVAVWQVSNP (88 aa). Residues 517–600 form a d region; it reads STSPLIGQVG…SPTYKEFEVL (84 aa). One can recognise an IPT/TIG domain in the interval 520–598; it reads PLIGQVGPMM…IKSPTYKEFE (79 aa). The CBM20 domain occupies 599–703; sequence VLSGNQVSVR…TGTDTVMINW (105 aa). The e stretch occupies residues 601-703; the sequence is SGNQVSVRFG…TGTDTVMINW (103 aa).

This sequence belongs to the glycosyl hydrolase 13 family. Monomer. The cofactor is Ca(2+).

It is found in the secreted. It catalyses the reaction Cyclizes part of a (1-&gt;4)-alpha-D-glucan chain by formation of a (1-&gt;4)-alpha-D-glucosidic bond.. This Bacillus sp. (strain 1-1) protein is Cyclomaltodextrin glucanotransferase (cgt).